The following is a 319-amino-acid chain: Lipoyl synthase (319 aa).

Residues cysteine 66, cysteine 71, cysteine 77, cysteine 92, cysteine 96, cysteine 99, and serine 305 each contribute to the [4Fe-4S] cluster site. Residues 78 to 294 form the Radical SAM core domain; sequence FNRGTATFMI…KKEALSIGFT (217 aa).

The protein belongs to the radical SAM superfamily. Lipoyl synthase family. The cofactor is [4Fe-4S] cluster.

It is found in the cytoplasm. It catalyses the reaction [[Fe-S] cluster scaffold protein carrying a second [4Fe-4S](2+) cluster] + N(6)-octanoyl-L-lysyl-[protein] + 2 oxidized [2Fe-2S]-[ferredoxin] + 2 S-adenosyl-L-methionine + 4 H(+) = [[Fe-S] cluster scaffold protein] + N(6)-[(R)-dihydrolipoyl]-L-lysyl-[protein] + 4 Fe(3+) + 2 hydrogen sulfide + 2 5'-deoxyadenosine + 2 L-methionine + 2 reduced [2Fe-2S]-[ferredoxin]. The protein operates within protein modification; protein lipoylation via endogenous pathway; protein N(6)-(lipoyl)lysine from octanoyl-[acyl-carrier-protein]: step 2/2. Catalyzes the radical-mediated insertion of two sulfur atoms into the C-6 and C-8 positions of the octanoyl moiety bound to the lipoyl domains of lipoate-dependent enzymes, thereby converting the octanoylated domains into lipoylated derivatives. The protein is Lipoyl synthase of Buchnera aphidicola subsp. Schizaphis graminum (strain Sg).